The primary structure comprises 296 residues: Partitioning protein REP2 (296 aa).

Residue methionine 1 is modified to N-acetylmethionine. Residues 1–57 (MDDIETAKNLTVKARTAYSVWDVCRLFIEMIAPDVDIDIESKRKSDELLFPGYVIRP) are interaction with REP1. Residues 58–296 (MESLTTGRPY…GRKSRNTSRV (239 aa)) are DNA-binding, and self-association. The tract at residues 228–296 (SELEGRTEVN…GRKSRNTSRV (69 aa)) is disordered. Residues 275-296 (PTKKRRVATRVRGRKSRNTSRV) show a composition bias toward basic residues. The nuclear localization stretch occupies residues 276–296 (TKKRRVATRVRGRKSRNTSRV).

Interacts with REP1.

Its subcellular location is the nucleus. Its function is as follows. Part of the plasmid partitioning system, which ensures the equal distribution of replicated plasmid molecules to daughter cells. The plasmids exist as well-organized plasmid foci within the nucleus that stay together throughout the cell-cycle and act as entity during segregation, effetively reducing copy number to one. Plasmid partitioning requires the proteins REP1, REP2, and a cis-acting locus STB (REP3). REP1-REP2 stably associate with CSE4-containing chromatin at STB during S-phase, marking the locus with a centromeric tag, and thereby probably catching mitotic spindle microtubules to the plasmid cluster and coupling plasmid segregation to chromosome segregation. REP1-REP2 are required to recruit the cohesin complex to the STB locus for pairing of the replicated plasmid cluster, a prerequisite for successful plasmid segregation. REP1-REP2 also negatively regulate expression of site-specific recombinase FLP and of RAF1. This Saccharomyces cerevisiae (strain ATCC 204508 / S288c) (Baker's yeast) protein is Partitioning protein REP2 (REP2).